Consider the following 320-residue polypeptide: L-lactate dehydrogenase 2 (320 aa).

NAD(+)-binding positions include 18–19, Asp-40, and Arg-45; that span reads AV. Residues Gln-88, Arg-94, and 126–129 contribute to the substrate site; that span reads NPVD. NAD(+) contacts are provided by residues 124–126 and Ser-149; that span reads ITN. Substrate is bound at residue 154 to 157; sequence DSAR. Beta-D-fructose 1,6-bisphosphate is bound by residues Arg-159 and 171-176; that span reads KNVHAY. His-181 (proton acceptor) is an active-site residue. The residue at position 228 (Tyr-228) is a Phosphotyrosine. Thr-237 contacts substrate.

The protein belongs to the LDH/MDH superfamily. LDH family. As to quaternary structure, homotetramer.

It localises to the cytoplasm. It carries out the reaction (S)-lactate + NAD(+) = pyruvate + NADH + H(+). It functions in the pathway fermentation; pyruvate fermentation to lactate; (S)-lactate from pyruvate: step 1/1. Allosterically activated by fructose 1,6-bisphosphate (FBP). Functionally, catalyzes the conversion of lactate to pyruvate. The chain is L-lactate dehydrogenase 2 from Bifidobacterium longum subsp. longum (strain ATCC 15707 / DSM 20219 / JCM 1217 / NCTC 11818 / E194b).